We begin with the raw amino-acid sequence, 470 residues long: Nucleoporin NUP49 (470 aa).

Over residues 1–13 (MSLFGTNTTSQTP) the composition is skewed to polar residues. The tract at residues 1–92 (MSLFGTNTTS…STTTTTSQPQ (92 aa)) is disordered. 12 GLFG repeats span residues 17–20 (GLFG), 45–48 (GLFG), 63–66 (GLFG), 79–82 (GLFG), 96–99 (GLFG), 111–114 (GLFG), 127–130 (GLFG), 142–145 (GLFG), 156–159 (GLFG), 168–171 (GLFG), 181–184 (GLFG), and 193–197 (GLFGQ). Over residues 20-31 (GTTTSQSAQTGS) the composition is skewed to low complexity. The segment covering 32–74 (LFGTATSQPQQTGGLFGSTATQTPSSQLQSTGLFGSTTATSQP) has biased composition (polar residues). Residues 75-92 (QQTGGLFGSTTTTTSQPQ) show a composition bias toward low complexity. The disordered stretch occupies residues 196 to 221 (GQSTTQPQQQQNATPGLTMGQSTNTQ). The segment covering 197-206 (QSTTQPQQQQ) has biased composition (low complexity). Over residues 207 to 221 (NATPGLTMGQSTNTQ) the composition is skewed to polar residues. Coiled-coil stretches lie at residues 239–270 (TRFNDLTEALQQEIAKIDEEIQKCIRDKEAVD) and 375–401 (FSKTADEMEEMMKKFEKTITEIEAHLT).

This sequence belongs to the nucleoporin GLFG family. As to quaternary structure, component of the nuclear pore complex (NPC). NPC constitutes the exclusive means of nucleocytoplasmic transport. NPCs allow the passive diffusion of ions and small molecules and the active, nuclear transport receptor-mediated bidirectional transport of macromolecules such as proteins, RNAs, ribonucleoparticles (RNPs), and ribosomal subunits across the nuclear envelope. Due to its 8-fold rotational symmetry, all subunits are present with 8 copies or multiples thereof.

Its subcellular location is the nucleus. It is found in the nuclear pore complex. The protein resides in the nucleus membrane. Its function is as follows. Functions as a component of the nuclear pore complex (NPC). NPC components, collectively referred to as nucleoporins (NUPs), can play the role of both NPC structural components and of docking or interaction partners for transiently associated nuclear transport factors. Active directional transport is assured by both, a Phe-Gly (FG) repeat affinity gradient for these transport factors across the NPC and a transport cofactor concentration gradient across the nuclear envelope (GSP1 and GSP2 GTPases associated predominantly with GTP in the nucleus, with GDP in the cytoplasm). NUP49 plays an important role in several nuclear transport pathways including poly(A)+ RNA, tRNA, and pre-ribosome transport. This Chaetomium thermophilum (strain DSM 1495 / CBS 144.50 / IMI 039719) (Thermochaetoides thermophila) protein is Nucleoporin NUP49 (NUP49).